Here is a 44-residue protein sequence, read N- to C-terminus: Photosystem II reaction center protein K (44 aa).

The propeptide occupies 1–7 (MESLLLA). Residues 23-43 (FPVIPVFFLLLAFVWQAAVGF) traverse the membrane as a helical segment.

The protein belongs to the PsbK family. As to quaternary structure, PSII is composed of 1 copy each of membrane proteins PsbA, PsbB, PsbC, PsbD, PsbE, PsbF, PsbH, PsbI, PsbJ, PsbK, PsbL, PsbM, PsbT, PsbX, PsbY, PsbZ, Psb30/Ycf12, at least 3 peripheral proteins of the oxygen-evolving complex and a large number of cofactors. It forms dimeric complexes.

Its subcellular location is the plastid. The protein resides in the chloroplast thylakoid membrane. Functionally, one of the components of the core complex of photosystem II (PSII). PSII is a light-driven water:plastoquinone oxidoreductase that uses light energy to abstract electrons from H(2)O, generating O(2) and a proton gradient subsequently used for ATP formation. It consists of a core antenna complex that captures photons, and an electron transfer chain that converts photonic excitation into a charge separation. The protein is Photosystem II reaction center protein K of Thalassiosira pseudonana (Marine diatom).